The primary structure comprises 248 residues: Adenosylcobinamide-GDP ribazoletransferase (248 aa).

Transmembrane regions (helical) follow at residues 28–48 (LFWF…AGYL), 103–123 (VGSF…IVLV), 126–146 (LAFG…LVQV), 169–189 (AGIQ…LLLM), 193–213 (MLPS…MSLL), and 225–245 (VLGA…VFLA).

This sequence belongs to the CobS family. Mg(2+) is required as a cofactor.

The protein resides in the cell inner membrane. The enzyme catalyses alpha-ribazole + adenosylcob(III)inamide-GDP = adenosylcob(III)alamin + GMP + H(+). It catalyses the reaction alpha-ribazole 5'-phosphate + adenosylcob(III)inamide-GDP = adenosylcob(III)alamin 5'-phosphate + GMP + H(+). It functions in the pathway cofactor biosynthesis; adenosylcobalamin biosynthesis; adenosylcobalamin from cob(II)yrinate a,c-diamide: step 7/7. In terms of biological role, joins adenosylcobinamide-GDP and alpha-ribazole to generate adenosylcobalamin (Ado-cobalamin). Also synthesizes adenosylcobalamin 5'-phosphate from adenosylcobinamide-GDP and alpha-ribazole 5'-phosphate. This is Adenosylcobinamide-GDP ribazoletransferase from Chlorobium phaeobacteroides (strain BS1).